The primary structure comprises 193 residues: CRIB domain-containing protein RIC5 (193 aa).

A CRIB domain is found at 29-42 (IGIPTDVKHVAHIG). The disordered stretch occupies residues 42–193 (GWEGPSATTP…CAGLGSSTGR (152 aa)). Over residues 55-67 (HDFKPTDQTKTET) the composition is skewed to basic and acidic residues. The segment covering 90 to 100 (STGNNSPTESP) has biased composition (polar residues). The segment covering 123-134 (GSGSESGSGLEL) has biased composition (low complexity).

In terms of assembly, interacts with ARAC11/ROP1. As to expression, expressed in flowers and pollen.

It is found in the cell membrane. In terms of biological role, functions as a downstream effector of Rho-related GTP binding proteins of the 'Rho of Plants' (ROPs) family. Participates in the propagation of ROP GTPase signals in specific cellular responses. Is involved in pollen tube growth regulation through its interaction with ARAC11/ROP1. The chain is CRIB domain-containing protein RIC5 (RIC5) from Arabidopsis thaliana (Mouse-ear cress).